We begin with the raw amino-acid sequence, 419 residues long: MAGSGCAWGAEPPRFLEAFGRLWQVQSRLGSGSSASVYRVRCCGTPGSPPGALKQFLPPGTTGAAASAAEYGFRKERAALEQLQGHRNIVTLYGVFTIHFSPNVPSRCLLLELLDVSVSELLVYSSHQGCSMWMIQHCARDVLEALAFLHHEGYVHADLKPRNILWSAENECFKLIDFGLSFKEGNQDVKYIQTDGYRAPEAELQNCLAQAGLQSDTECTSAVDLWSLGIILLEMFSGMKLKHTVRSQEWKANSSAIIDHIFASKAVVNAAIPAYHLRDLIKSMLHDDPSRRIPAEMALCSPFFSIPFAPHIEDLVMLPTPVLRLLNVLDDDYLENEDEYEDVVEDVKEECQKYGPVVSLLVPKENPGRGQVFVEYANAGDSKAAQKLLTGRMFDGKFVVATFYPLSAYKRGYLYQTLL.

A Protein kinase domain is found at 23-304; the sequence is WQVQSRLGSG…AEMALCSPFF (282 aa). Residues 29-37 and Lys-54 contribute to the ATP site; that span reads LGSGSSASV. Catalysis depends on proton acceptor residues Asp-141 and Asp-158. The RRM domain occupies 324 to 406; that stretch reads RLLNVLDDDY…KFVVATFYPL (83 aa).

It belongs to the protein kinase superfamily. Ser/Thr protein kinase family. Interacts with stathmin and CDKN1B/p27Kip1 Interacts with PAM. In the embryo, preferentially expressed in the developing nervous system.

Its subcellular location is the cytoplasm. It localises to the nucleus. It catalyses the reaction L-seryl-[protein] + ATP = O-phospho-L-seryl-[protein] + ADP + H(+). The enzyme catalyses L-threonyl-[protein] + ATP = O-phospho-L-threonyl-[protein] + ADP + H(+). Functionally, upon serum stimulation, phosphorylates CDKN1B/p27Kip1, thus controlling CDKN1B subcellular location and cell cycle progression in G1 phase. May be involved in trafficking and/or processing of RNA. This Rattus norvegicus (Rat) protein is Serine/threonine-protein kinase Kist (Uhmk1).